The following is an 80-amino-acid chain: MAAMKYKGSVFIILVILLLSSSLLAHSSSTKSFFWLGETQDTKAMKKEKKIDGGTANEVEERQVPTGSDPLHHKHIPFTP.

The N-terminal stretch at 1–25 is a signal peptide; sequence MAAMKYKGSVFIILVILLLSSSLLA. The interval 45–80 is disordered; it reads MKKEKKIDGGTANEVEERQVPTGSDPLHHKHIPFTP. Residue P65 is modified to Hydroxyproline.

The protein belongs to the CLV3/ESR signal peptide family. As to expression, mostly expressed at low levels in stems and apex, and, to a lower extent, in roots, seedlings, leaves, flowers, siliques and pollen.

It localises to the secreted. Its subcellular location is the extracellular space. Extracellular signal peptide secreted by differentiated root cells that regulates root cell fate. Acts with ACR4 as a ligand-receptor pair in a signal transduction pathway, coordinating movement of the root tip and organization of cell divisions in the root meristem. Promotes cell differentiation in the distal root meristem in a dose-dependent manner, especially the transition from columella stem cells (CSC) daughters into columella cells (CCs). Induces ACR4 expression in root quiescent center (QC). Involved in WUX5 QC-specific expression pattern regulation. Regulates the transition of protophloem cells from proliferation to differentiation, thus impinging on postembryonic growth capacity of the root meristem; this signaling pathway requires CRN and CLV2. In Arabidopsis thaliana (Mouse-ear cress), this protein is CLAVATA3/ESR (CLE)-related protein 40.